The following is a 180-amino-acid chain: MASTISAYKEKMKELSVLSLICSCFYSQPHPNTVYQYGDMEVKQLDKRASGQSFEVILKSPSDLSPESPMLSSPPKRKDTSLEELQKRLEAAEERRKTQEAQVLKQLAERREHEREVLHKALEENNNFSRLAEEKLNYKMELSKEIREAHLAALRERLREKELHAAEVRRNKEQREEMSG.

2 S-palmitoyl cysteine lipidation sites follow: Cys-22 and Cys-24. An SLD domain is found at Gly-38 to Gly-180. A phosphoserine mark is found at Ser-50, Ser-60, Ser-65, Ser-68, Ser-72, Ser-73, and Ser-81. The tract at residues Leu-58–Leu-82 is disordered. The span at Ser-60–Pro-74 shows a compositional bias: low complexity. Residues Lys-76–Ser-179 are a coiled coil.

This sequence belongs to the stathmin family. In terms of assembly, interacts with STAT3. Interacts with CLU (secreted form); this interaction may act as an important modulator during neuronal differentiation. In terms of processing, N-terminal palmitoylation promotes specific anchoring to the cytosolic leaflet of Golgi membranes and subsequent vesicular trafficking along dendrites and axons. Neuronal Stathmins are substrates for palmitoyltransferases ZDHHC3, ZDHHC7 and ZDHHC15.

It localises to the golgi apparatus. The protein resides in the cell projection. It is found in the growth cone. Its subcellular location is the axon. The protein localises to the cytoplasm. It localises to the cytosol. Functionally, exhibits microtubule-destabilizing activity, which is antagonized by STAT3. This is Stathmin-3 (STMN3) from Bos taurus (Bovine).